Reading from the N-terminus, the 251-residue chain is UstYa family oxidase phomYb (251 aa).

The interval 1–47 is disordered; that stretch reads MDGYSSKKPRSASPSRSSLTEVEEEERDTLLKTVSLEEEDKSGENGP. Residues 58–78 traverse the membrane as a helical segment; it reads AIGILMLSNIAFIAAFLTVFV. Residue N135 is glycosylated (N-linked (GlcNAc...) asparagine). 2 consecutive short sequence motifs (HXXHC) follow at residues 160–164 and 187–191; these read HQLHC and HVSHC.

The protein belongs to the ustYa family.

It is found in the membrane. The protein operates within mycotoxin biosynthesis. Its function is as follows. UstYa family oxidase; part of the gene cluster that mediates the biosynthesis of the phomopsins, a group of hexapeptide mycotoxins which infects lupins and causes lupinosis disease in livestock. Within the pathway, phomYb is probably involved in the construction of the macrocyclic structure of the phomopsins. The pathway starts with the processing of the precursor phomA by several endopeptidases including kexin proteases as well as the cluster-specific S41 family peptidase phomP1 and the oligopeptidase phomG to produce 10 identical copies of the hexapeptide Tyr-Val-Ile-Pro-Ile-Asp. After being excised from the precursor peptide, the core peptides are cyclized and modified post-translationally by enzymes encoded within the gene cluster. The timing and order of proteolysis of the phomA precursor and PTMs are still unknown. Two tyrosinase-like enzymes, phomQ1 and phomQ2, catalyze the chlorination and hydroxylation of Tyr, respectively. PhomYb, is proposed to be involved in the construction of the macrocyclic structure. The other 4 ustYa family proteins may be involved in PTMs that generate the unique structure of phomopsin A. PhomYa is required for the hydroxylation of C-beta of Tyr. PhomYc, phomYd, and phomYe are responsible for the biosynthesis of 2,3-dehydroisoleucine (dIle), 2,3-dehydroaspartic acid (dAsp), and 3,4-dehydroproline (dPro), respectively. While dIle formation by phomYc is indispensable for the installation of dAsp by phomYd, the order of the other PTMs have not been elucidated yet. Most of the biosynthetic enzymes likely have broad substrate specificity, and thus, there might be a metabolic grid from a precursor to phomopsin A. The enzyme(s) responsible for the biosynthesis of 3,4-dehydrovaline (dVal) have also not been identified yet. Finally, phomM acts as an S-adenosylmethionine-dependent alpha-N-methyltransferase that catalyzes two successive N-methylation reactions, converting N-desmethyl-phomopsin A to phomopsin A and phomopsin A further to an N,N-dimethylated congener called phomopsin E. The polypeptide is UstYa family oxidase phomYb (Diaporthe leptostromiformis (Lupinosis disease fungus)).